We begin with the raw amino-acid sequence, 180 residues long: Acireductone dioxygenase (180 aa).

Fe(2+)-binding residues include His-99, His-101, Glu-105, and His-145. Ni(2+) is bound by residues His-99, His-101, Glu-105, and His-145.

The protein belongs to the acireductone dioxygenase (ARD) family. Monomer. Fe(2+) serves as cofactor. Requires Ni(2+) as cofactor.

It catalyses the reaction 1,2-dihydroxy-5-(methylsulfanyl)pent-1-en-3-one + O2 = 3-(methylsulfanyl)propanoate + CO + formate + 2 H(+). The catalysed reaction is 1,2-dihydroxy-5-(methylsulfanyl)pent-1-en-3-one + O2 = 4-methylsulfanyl-2-oxobutanoate + formate + 2 H(+). It participates in amino-acid biosynthesis; L-methionine biosynthesis via salvage pathway; L-methionine from S-methyl-5-thio-alpha-D-ribose 1-phosphate: step 5/6. Functionally, catalyzes 2 different reactions between oxygen and the acireductone 1,2-dihydroxy-3-keto-5-methylthiopentene (DHK-MTPene) depending upon the metal bound in the active site. Fe-containing acireductone dioxygenase (Fe-ARD) produces formate and 2-keto-4-methylthiobutyrate (KMTB), the alpha-ketoacid precursor of methionine in the methionine recycle pathway. Ni-containing acireductone dioxygenase (Ni-ARD) produces methylthiopropionate, carbon monoxide and formate, and does not lie on the methionine recycle pathway. The polypeptide is Acireductone dioxygenase (Geobacillus thermodenitrificans (strain NG80-2)).